Here is a 455-residue protein sequence, read N- to C-terminus: Serine--tRNA ligase (455 aa).

L-serine is bound at residue 252–254 (TAE). ATP is bound by residues 283-285 (RKE) and Val-299. An L-serine-binding site is contributed by Glu-306. Residue 370-373 (EVVS) participates in ATP binding. Thr-406 is a binding site for L-serine.

The protein belongs to the class-II aminoacyl-tRNA synthetase family. Type-1 seryl-tRNA synthetase subfamily. As to quaternary structure, homodimer. The tRNA molecule binds across the dimer.

It localises to the cytoplasm. It carries out the reaction tRNA(Ser) + L-serine + ATP = L-seryl-tRNA(Ser) + AMP + diphosphate + H(+). The enzyme catalyses tRNA(Sec) + L-serine + ATP = L-seryl-tRNA(Sec) + AMP + diphosphate + H(+). It participates in aminoacyl-tRNA biosynthesis; selenocysteinyl-tRNA(Sec) biosynthesis; L-seryl-tRNA(Sec) from L-serine and tRNA(Sec): step 1/1. Catalyzes the attachment of serine to tRNA(Ser). Is also able to aminoacylate tRNA(Sec) with serine, to form the misacylated tRNA L-seryl-tRNA(Sec), which will be further converted into selenocysteinyl-tRNA(Sec). This is Serine--tRNA ligase from Pyrococcus furiosus (strain ATCC 43587 / DSM 3638 / JCM 8422 / Vc1).